The primary structure comprises 233 residues: Ribose-5-phosphate isomerase A (233 aa).

Residues 28–31 (TGST), 85–88 (DGAD), and 98–101 (KGLG) contribute to the substrate site. Glu-107 (proton acceptor) is an active-site residue. A substrate-binding site is contributed by Lys-125.

This sequence belongs to the ribose 5-phosphate isomerase family. In terms of assembly, homodimer.

The catalysed reaction is aldehydo-D-ribose 5-phosphate = D-ribulose 5-phosphate. Its pathway is carbohydrate degradation; pentose phosphate pathway; D-ribose 5-phosphate from D-ribulose 5-phosphate (non-oxidative stage): step 1/1. Functionally, catalyzes the reversible conversion of ribose-5-phosphate to ribulose 5-phosphate. The polypeptide is Ribose-5-phosphate isomerase A (Roseiflexus sp. (strain RS-1)).